We begin with the raw amino-acid sequence, 216 residues long: Octanoyltransferase (216 aa).

The region spanning 32 to 207 (PDSQDEIWLV…QLVKHLDYAE (176 aa)) is the BPL/LPL catalytic domain. Substrate contacts are provided by residues 71 to 78 (RGGQVTYH), 138 to 140 (SLG), and 151 to 153 (GLA). The active-site Acyl-thioester intermediate is cysteine 169.

It belongs to the LipB family.

The protein resides in the cytoplasm. The enzyme catalyses octanoyl-[ACP] + L-lysyl-[protein] = N(6)-octanoyl-L-lysyl-[protein] + holo-[ACP] + H(+). It participates in protein modification; protein lipoylation via endogenous pathway; protein N(6)-(lipoyl)lysine from octanoyl-[acyl-carrier-protein]: step 1/2. Its function is as follows. Catalyzes the transfer of endogenously produced octanoic acid from octanoyl-acyl-carrier-protein onto the lipoyl domains of lipoate-dependent enzymes. Lipoyl-ACP can also act as a substrate although octanoyl-ACP is likely to be the physiological substrate. The chain is Octanoyltransferase from Pseudomonas putida (strain ATCC 47054 / DSM 6125 / CFBP 8728 / NCIMB 11950 / KT2440).